A 192-amino-acid polypeptide reads, in one-letter code: Ras-like GTP-binding protein Rho1 (192 aa).

Residue 12–19 (GDGACGKT) participates in GTP binding. Residues 34-42 (YVPTVFENY) carry the Effector region motif. Residues 59-63 (DTAGQ) and 117-120 (NKKD) each bind GTP. Cysteine 189 carries the post-translational modification Cysteine methyl ester. A lipid anchor (S-geranylgeranyl cysteine) is attached at cysteine 189. The propeptide at 190-192 (LLL) is removed in mature form.

It belongs to the small GTPase superfamily. Rho family. As to quaternary structure, interacts with capu. Interacts (via REM repeats) with Pkn (via N-terminus). Interacts (via N-terminus) with wash (via N-terminus). May interact with dia/diaphanous (via CBD/FH3 domain). In terms of tissue distribution, expressed in hemocytes (at protein level).

It localises to the cell membrane. It is found in the cytoplasm. The protein resides in the cytoskeleton. Its subcellular location is the apical cell membrane. The protein localises to the lateral cell membrane. Its function is as follows. Has a role in regulating actin cytoskeletal organization: required during early development for proper execution of morphogenetic movements of individual cells and groups of cells important for the formation of the embryonic body plan. Plays a role in regulating dorsal closure during embryogenesis. During axis elongation, required for Rho-kinase Rok planar polarity and adherens junction localization as well as for generating a planar polarized distribution of the actin-binding protein Shrm. During embryogenesis, acts upstream of wash to regulate the developmental migration of tail hemocytes anteriorly along the ventral midline. May have a role in eye development. Involved in targeted recruitment of dia/diaphanous to apical membranes of polarized epithelial cells. The protein is Ras-like GTP-binding protein Rho1 of Drosophila melanogaster (Fruit fly).